The sequence spans 209 residues: MNDSLKSRGIMLVISSPSGGGKTTISHLLINELQNDLVRSISVTTREPRDGEINGKDYFFVTEPEFINLCNTNQMLEYAKVFGNYYGIPRKFVTDNIANGVSVLFSIDWQGAFKLIDIMREHVVSIFILPPSMEELQRRLYNRSGESDVINKRLGEAAFEISHCYRYDYVIVNHDIEQSVYQIKCIFTSEKLKTQRRVSLKQFIDNCIR.

The Guanylate kinase-like domain maps to 9 to 188 (GIMLVISSPS…SVYQIKCIFT (180 aa)). 16 to 23 (SPSGGGKT) serves as a coordination point for ATP.

It belongs to the guanylate kinase family.

The protein resides in the cytoplasm. It catalyses the reaction GMP + ATP = GDP + ADP. Its function is as follows. Essential for recycling GMP and indirectly, cGMP. The sequence is that of Guanylate kinase from Ehrlichia chaffeensis (strain ATCC CRL-10679 / Arkansas).